A 171-amino-acid chain; its full sequence is UPF0398 protein stu0232 (171 aa).

The protein belongs to the UPF0398 family.

This is UPF0398 protein stu0232 from Streptococcus thermophilus (strain ATCC BAA-250 / LMG 18311).